Consider the following 367-residue polypeptide: tRNA 2-selenouridine synthase (367 aa).

The Rhodanese domain maps to 12–135 (FLSGVAMLDV…MRGFLIETTD (124 aa)). C95 serves as the catalytic S-selanylcysteine intermediate.

It belongs to the SelU family. Monomer.

It carries out the reaction 5-methylaminomethyl-2-thiouridine(34) in tRNA + selenophosphate + (2E)-geranyl diphosphate + H2O + H(+) = 5-methylaminomethyl-2-selenouridine(34) in tRNA + (2E)-thiogeraniol + phosphate + diphosphate. It catalyses the reaction 5-methylaminomethyl-2-thiouridine(34) in tRNA + (2E)-geranyl diphosphate = 5-methylaminomethyl-S-(2E)-geranyl-thiouridine(34) in tRNA + diphosphate. The enzyme catalyses 5-methylaminomethyl-S-(2E)-geranyl-thiouridine(34) in tRNA + selenophosphate + H(+) = 5-methylaminomethyl-2-(Se-phospho)selenouridine(34) in tRNA + (2E)-thiogeraniol. The catalysed reaction is 5-methylaminomethyl-2-(Se-phospho)selenouridine(34) in tRNA + H2O = 5-methylaminomethyl-2-selenouridine(34) in tRNA + phosphate. In terms of biological role, involved in the post-transcriptional modification of the uridine at the wobble position (U34) of tRNA(Lys), tRNA(Glu) and tRNA(Gln). Catalyzes the conversion of 2-thiouridine (S2U-RNA) to 2-selenouridine (Se2U-RNA). Acts in a two-step process involving geranylation of 2-thiouridine (S2U) to S-geranyl-2-thiouridine (geS2U) and subsequent selenation of the latter derivative to 2-selenouridine (Se2U) in the tRNA chain. The chain is tRNA 2-selenouridine synthase from Cupriavidus necator (strain ATCC 17699 / DSM 428 / KCTC 22496 / NCIMB 10442 / H16 / Stanier 337) (Ralstonia eutropha).